The chain runs to 83 residues: Small ribosomal subunit protein uS17 (83 aa).

It belongs to the universal ribosomal protein uS17 family. As to quaternary structure, part of the 30S ribosomal subunit.

One of the primary rRNA binding proteins, it binds specifically to the 5'-end of 16S ribosomal RNA. The chain is Small ribosomal subunit protein uS17 from Ehrlichia canis (strain Jake).